The chain runs to 141 residues: Deoxyuridine 5'-triphosphate nucleotidohydrolase (141 aa).

Belongs to the dUTPase family. The cofactor is Mg(2+).

The catalysed reaction is dUTP + H2O = dUMP + diphosphate + H(+). It functions in the pathway pyrimidine metabolism; dUMP biosynthesis; dUMP from dCTP (dUTP route): step 2/2. Its function is as follows. This enzyme is involved in nucleotide metabolism: it produces dUMP, the immediate precursor of thymidine nucleotides and it decreases the intracellular concentration of dUTP so that uracil cannot be incorporated into DNA. The sequence is that of Deoxyuridine 5'-triphosphate nucleotidohydrolase from Chlorella (PBCV-1).